Here is a 218-residue protein sequence, read N- to C-terminus: Octanoyltransferase (218 aa).

A BPL/LPL catalytic domain is found at 27 to 210 (AGAEETLYLL…QFRAIFADST (184 aa)). Substrate-binding positions include 72-79 (RGGNITCH), 139-141 (SIG), and 152-154 (GFA). Cys170 (acyl-thioester intermediate) is an active-site residue.

It belongs to the LipB family.

It localises to the cytoplasm. It carries out the reaction octanoyl-[ACP] + L-lysyl-[protein] = N(6)-octanoyl-L-lysyl-[protein] + holo-[ACP] + H(+). The protein operates within protein modification; protein lipoylation via endogenous pathway; protein N(6)-(lipoyl)lysine from octanoyl-[acyl-carrier-protein]: step 1/2. In terms of biological role, catalyzes the transfer of endogenously produced octanoic acid from octanoyl-acyl-carrier-protein onto the lipoyl domains of lipoate-dependent enzymes. Lipoyl-ACP can also act as a substrate although octanoyl-ACP is likely to be the physiological substrate. The chain is Octanoyltransferase from Nitratidesulfovibrio vulgaris (strain DSM 19637 / Miyazaki F) (Desulfovibrio vulgaris).